The chain runs to 343 residues: MDFLVLFLLYLALVLLGFVMICIGSKTHYLQGLISRGAQVFSYIIPECLQRAMLSVLHYLFHTRNYTFVVLHLILQGMVYTEYTWEIFGLCQQLEFSLYYLFLPYLLLIVNLLFFTLSCVTNPGTITKANELLFLQVYEFDGVMFPKNVRCPTCDLRKPARSKHCSVCNRCVHRFDHHCVWVNNCIGAWNTRYFLSYLFTLTASAATMAVVSTVFLVRLVVMSDVYLQTYVDDLGHLQVVDTVFLVQYLFLTFPRIVFLVGFVVVLSFLLGGYLCFCLYLAATNQTTNEWYKGDRAWCQHCPHVARPPAAEPQAYRNIHSHGLWSNLREIFLPATACYERKEK.

The Lumenal portion of the chain corresponds to 1-2 (MD). Residues 3–23 (FLVLFLLYLALVLLGFVMICI) form a helical membrane-spanning segment. At 24–67 (GSKTHYLQGLISRGAQVFSYIIPECLQRAMLSVLHYLFHTRNYT) the chain is on the cytoplasmic side. Residues 68–88 (FVVLHLILQGMVYTEYTWEIF) form a helical membrane-spanning segment. Residues 89–95 (GLCQQLE) lie on the Lumenal side of the membrane. A helical membrane pass occupies residues 96-116 (FSLYYLFLPYLLLIVNLLFFT). Topologically, residues 117–196 (LSCVTNPGTI…GAWNTRYFLS (80 aa)) are cytoplasmic. Positions 149 to 199 (VRCPTCDLRKPARSKHCSVCNRCVHRFDHHCVWVNNCIGAWNTRYFLSYLF) constitute a DHHC domain. Cys179 serves as the catalytic S-palmitoyl cysteine intermediate. Residues 197–217 (YLFTLTASAATMAVVSTVFLV) traverse the membrane as a helical segment. Topologically, residues 218 to 255 (RLVVMSDVYLQTYVDDLGHLQVVDTVFLVQYLFLTFPR) are lumenal. Residues 256–276 (IVFLVGFVVVLSFLLGGYLCF) traverse the membrane as a helical segment. Residues 277-343 (CLYLAATNQT…ATACYERKEK (67 aa)) lie on the Cytoplasmic side of the membrane. The Di-lysine motif signature appears at 340–343 (RKEK).

This sequence belongs to the DHHC palmitoyltransferase family. In terms of assembly, interacts with CPT1A.

The protein localises to the endoplasmic reticulum membrane. It is found in the golgi apparatus membrane. It localises to the cell membrane. The catalysed reaction is L-cysteinyl-[protein] + hexadecanoyl-CoA = S-hexadecanoyl-L-cysteinyl-[protein] + CoA. Functionally, palmitoyltransferase that could catalyze the addition of palmitate onto protein substrates including the D(2) dopamine receptor DRD2, GSK3B or MAVS. Mediates GSK3B palmitoylation to prevent its AKT1-mediated phosphorylation leading to activation of the STAT3 signaling pathway. Also catalyzes MAVS palmitoylation which promotes its stabilization and activation by inhibiting 'Lys-48'- but facilitating 'Lys-63'-linked ubiquitination. This is Palmitoyltransferase ZDHHC4 from Bos taurus (Bovine).